The sequence spans 262 residues: MKSTVYHPYHLVDPSPWPYVGACGALFITVGSVVYFHYSQTWVLLMGAITLSLTMIVWWRDVIREATFQGLHTMVVKQGLKYGMLLFILSEVLFFFSFFWAFFHSSIAPNIELGAVWPPQGINPLNPFSVPLLNTAVLLSSGATVTWAHHALISGKKTEAINGLTITVVLGLIFTGLQAMEYYEAPFAISDSVYGSTFFVATGFHGMHVIIGTTFLAVCLARLVYHQFTRHHHLGFEAASWYWHFVDVVWLFLYICIYWWGS.

Transmembrane regions (helical) follow at residues 16–36, 39–59, 83–103, 128–148, 160–180, 198–218, and 241–261; these read PWPY…VVYF, SQTW…IVWW, GMLL…WAFF, FSVP…VTWA, AING…LQAM, FFVA…FLAV, and WYWH…YWWG.

Belongs to the cytochrome c oxidase subunit 3 family. Component of the cytochrome c oxidase (complex IV, CIV), a multisubunit enzyme composed of a catalytic core of 3 subunits and several supernumerary subunits. The complex exists as a monomer or a dimer and forms supercomplexes (SCs) in the inner mitochondrial membrane with ubiquinol-cytochrome c oxidoreductase (cytochrome b-c1 complex, complex III, CIII).

It localises to the mitochondrion inner membrane. It carries out the reaction 4 Fe(II)-[cytochrome c] + O2 + 8 H(+)(in) = 4 Fe(III)-[cytochrome c] + 2 H2O + 4 H(+)(out). Functionally, component of the cytochrome c oxidase, the last enzyme in the mitochondrial electron transport chain which drives oxidative phosphorylation. The respiratory chain contains 3 multisubunit complexes succinate dehydrogenase (complex II, CII), ubiquinol-cytochrome c oxidoreductase (cytochrome b-c1 complex, complex III, CIII) and cytochrome c oxidase (complex IV, CIV), that cooperate to transfer electrons derived from NADH and succinate to molecular oxygen, creating an electrochemical gradient over the inner membrane that drives transmembrane transport and the ATP synthase. Cytochrome c oxidase is the component of the respiratory chain that catalyzes the reduction of oxygen to water. Electrons originating from reduced cytochrome c in the intermembrane space (IMS) are transferred via the dinuclear copper A center (CU(A)) of subunit 2 and heme A of subunit 1 to the active site in subunit 1, a binuclear center (BNC) formed by heme A3 and copper B (CU(B)). The BNC reduces molecular oxygen to 2 water molecules using 4 electrons from cytochrome c in the IMS and 4 protons from the mitochondrial matrix. This Metridium senile (Brown sea anemone) protein is Cytochrome c oxidase subunit 3 (COIII).